The chain runs to 561 residues: Efflux pump bfoC (561 aa).

Positions 1–55 (MSDTARILGGPSASSSRDGGMELNSFTEVSQTNSRSHSTKEEEGQVDDQQRPARE) are disordered. The span at 24–36 (NSFTEVSQTNSRS) shows a compositional bias: polar residues. Basic and acidic residues predominate over residues 38 to 55 (STKEEEGQVDDQQRPARE). Helical transmembrane passes span 59 to 79 (GVLG…CIFC), 103 to 123 (DVGW…LTFG), 128 to 148 (FFPI…GSFI), 164 to 184 (VAGL…SQCV), 194 to 214 (GFIM…GGAF), 222 to 242 (WCFY…LFTF), 257 to 277 (AVGL…CLLL), 293 to 313 (VVAL…LQLW), 335 to 355 (LYGF…PIWF), 378 to 398 (VVFA…GPFM), 425 to 445 (IGYQ…PIFV), 457 to 477 (TATA…VSVA), and 530 to 550 (VHTF…ATVI).

Belongs to the major facilitator superfamily. TCR/Tet family.

It is found in the cell membrane. In terms of biological role, efflux pump; part of the gene cluster that mediates the biosynthesis of bifonsecin B, a dimeric gamma-naphthopyrone. The polypeptide is Efflux pump bfoC (Aspergillus brasiliensis (strain CBS 101740 / IMI 381727 / IBT 21946)).